Reading from the N-terminus, the 601-residue chain is Elongation factor 4 (601 aa).

The tr-type G domain maps to 5-187 (EHIRNFSIIA…AIVERLPAPE (183 aa)). GTP-binding positions include 17–22 (DHGKST) and 134–137 (NKVD).

Belongs to the TRAFAC class translation factor GTPase superfamily. Classic translation factor GTPase family. LepA subfamily.

The protein resides in the cell inner membrane. The catalysed reaction is GTP + H2O = GDP + phosphate + H(+). Required for accurate and efficient protein synthesis under certain stress conditions. May act as a fidelity factor of the translation reaction, by catalyzing a one-codon backward translocation of tRNAs on improperly translocated ribosomes. Back-translocation proceeds from a post-translocation (POST) complex to a pre-translocation (PRE) complex, thus giving elongation factor G a second chance to translocate the tRNAs correctly. Binds to ribosomes in a GTP-dependent manner. In Nitratidesulfovibrio vulgaris (strain DSM 19637 / Miyazaki F) (Desulfovibrio vulgaris), this protein is Elongation factor 4.